Here is a 262-residue protein sequence, read N- to C-terminus: Small ribosomal subunit protein eS1 (262 aa).

This sequence belongs to the eukaryotic ribosomal protein eS1 family. As to quaternary structure, component of the small ribosomal subunit. Mature ribosomes consist of a small (40S) and a large (60S) subunit. The 40S subunit contains about 33 different proteins and 1 molecule of RNA (18S). The 60S subunit contains about 49 different proteins and 3 molecules of RNA (25S, 5.8S and 5S).

Its subcellular location is the cytoplasm. In Plasmodium vivax (strain Salvador I), this protein is Small ribosomal subunit protein eS1.